The sequence spans 393 residues: CCA-adding enzyme (393 aa).

Gly-27 and Arg-30 together coordinate ATP. The CTP site is built by Gly-27 and Arg-30. Residues Asp-40 and Asp-42 each coordinate Mg(2+). ATP is bound by residues Arg-111, Asp-154, Arg-157, Arg-160, and Arg-163. Residues Arg-111, Asp-154, Arg-157, Arg-160, and Arg-163 each contribute to the CTP site.

It belongs to the tRNA nucleotidyltransferase/poly(A) polymerase family. Bacterial CCA-adding enzyme type 3 subfamily. Homodimer. Mg(2+) serves as cofactor.

It catalyses the reaction a tRNA precursor + 2 CTP + ATP = a tRNA with a 3' CCA end + 3 diphosphate. The enzyme catalyses a tRNA with a 3' CCA end + 2 CTP + ATP = a tRNA with a 3' CCACCA end + 3 diphosphate. Its function is as follows. Catalyzes the addition and repair of the essential 3'-terminal CCA sequence in tRNAs without using a nucleic acid template. Adds these three nucleotides in the order of C, C, and A to the tRNA nucleotide-73, using CTP and ATP as substrates and producing inorganic pyrophosphate. tRNA 3'-terminal CCA addition is required both for tRNA processing and repair. Also involved in tRNA surveillance by mediating tandem CCA addition to generate a CCACCA at the 3' terminus of unstable tRNAs. While stable tRNAs receive only 3'-terminal CCA, unstable tRNAs are marked with CCACCA and rapidly degraded. The protein is CCA-adding enzyme of Listeria monocytogenes serovar 1/2a (strain ATCC BAA-679 / EGD-e).